The following is a 103-amino-acid chain: uncharacterized protein (103 aa).

It is found in the mitochondrion. This is an uncharacterized protein from Claviceps purpurea (Ergot fungus).